Here is a 617-residue protein sequence, read N- to C-terminus: Protein fem-1 homolog C (617 aa).

Residue M1 is modified to N-acetylmethionine. ANK repeat units lie at residues 2 to 31 (DLKT…KAEV), 40 to 70 (NGAT…SIEV), 82 to 111 (EGAP…SVNN), 115 to 144 (TNST…DLEV), 148 to 177 (HGHT…DVNR), 181 to 210 (KGNT…KMEK), and 213 to 242 (YGMT…TSKT). TPR repeat units follow at residues 245–279 (INAL…RYSD) and 338–371 (SYYI…QQSN). 2 ANK repeats span residues 481–523 (NNFS…DVNV) and 527–556 (DDNS…HFDA).

This sequence belongs to the fem-1 family. As to quaternary structure, component of a Cul2-RING (CRL2) E3 ubiquitin-protein ligase complex, also named ECS (Elongin BC-CUL2/5-SOCS-box protein) complex, composed of CUL2, Elongin BC (ELOB and ELOC), RBX1 and substrate-specific adapter FEM1C. As to expression, widely expressed. Expressed at higher level in testis.

The protein operates within protein modification; protein ubiquitination. In terms of biological role, substrate-recognition component of a Cul2-RING (CRL2) E3 ubiquitin-protein ligase complex of the DesCEND (destruction via C-end degrons) pathway, which recognizes a C-degron located at the extreme C terminus of target proteins, leading to their ubiquitination and degradation. The C-degron recognized by the DesCEND pathway is usually a motif of less than ten residues and can be present in full-length proteins, truncated proteins or proteolytically cleaved forms. The CRL2(FEM1C) complex specifically recognizes proteins with an arginine at the C-terminus: recognizes and binds proteins ending with -Lys/Arg-Xaa-Arg and -Lys/Arg-Xaa-Xaa-Arg C-degrons, such as SIL1 or OR51B2, leading to their ubiquitination and degradation. The CRL2(FEM1C) complex mediates ubiquitination and degradation of truncated MSRB1/SEPX1 selenoproteins produced by failed UGA/Sec decoding. Promotes ubiquitination and degradation of SLBP. The chain is Protein fem-1 homolog C from Mus musculus (Mouse).